Here is a 165-residue protein sequence, read N- to C-terminus: MAILEIKKYPDEVLKKKAETISEINGDLQKLIDNMIETMYNANGIGLAAPQVGVLKRLIVVDTSPREQNQSLIVLINPEITDSEGEILSEEGCLSLPGFTTRLKRKERVIVKGLDRNGKEIEIEATGLLARALQHEIDHLDGILLIDKISPLKRELFRKKFKTKK.

Positions 93 and 135 each coordinate Fe cation. Residue E136 is part of the active site. Fe cation is bound at residue H139.

The protein belongs to the polypeptide deformylase family. The cofactor is Fe(2+).

The catalysed reaction is N-terminal N-formyl-L-methionyl-[peptide] + H2O = N-terminal L-methionyl-[peptide] + formate. Functionally, removes the formyl group from the N-terminal Met of newly synthesized proteins. Requires at least a dipeptide for an efficient rate of reaction. N-terminal L-methionine is a prerequisite for activity but the enzyme has broad specificity at other positions. The chain is Peptide deformylase from Thermodesulfovibrio yellowstonii (strain ATCC 51303 / DSM 11347 / YP87).